The primary structure comprises 781 residues: Cation channel sperm-associated auxiliary subunit delta (781 aa).

The signal sequence occupies residues 1–20; sequence MLVLMLVVATTFRLCPLVKA. At 21 to 725 the chain is on the extracellular side; the sequence is RPLCRIRTLR…YGAFPLSIFP (705 aa). 7 disulfides stabilise this stretch: C24/C370, C60/C146, C145/C153, C388/C497, C511/C705, C526/C573, and C625/C655. N231, N294, N458, N473, N539, and N631 each carry an N-linked (GlcNAc...) asparagine glycan. A helical transmembrane segment spans residues 726 to 749; sequence PEITIVLLTAATLLSIWLAYMIPQ. Over 750 to 781 the chain is Cytoplasmic; sequence LLHTEQGLEGNGFWVRLYQRCRKSCACLWGRC.

Belongs to the CATSPERD family. As to quaternary structure, component of the CatSper complex or CatSpermasome composed of the core pore-forming members CATSPER1, CATSPER2, CATSPER3 and CATSPER4 as well as auxiliary members CATSPERB, CATSPERG, CATSPERD, CATSPERE, CATSPERZ, C2CD6/CATSPERT, TMEM249, TMEM262 and EFCAB9. HSPA1 may be an additional auxiliary complex member. The core complex members CATSPER1, CATSPER2, CATSPER3 and CATSPER4 form a heterotetrameric channel. The auxiliary CATSPERB, CATSPERG, CATSPERD and CATSPERE subunits form a pavilion-like structure over the pore which stabilizes the complex through interactions with CATSPER4, CATSPER3, CATSPER1 and CATSPER2 respectively. TMEM262/CATSPERH interacts with CATSPERB, further stabilizing the complex. C2CD6/CATSPERT interacts at least with CATSPERD and is required for targeting the CatSper complex in the flagellar membrane.

The protein localises to the cell projection. The protein resides in the cilium. It localises to the flagellum membrane. Auxiliary component of the CatSper complex, a complex involved in sperm cell hyperactivation. Sperm cell hyperactivation is needed for sperm motility which is essential late in the preparation of sperm for fertilization. Required for CATSPER1 stability before intraflagellar transport and/or incorporation of the CatSper complex channel into the flagellar membrane. This chain is Cation channel sperm-associated auxiliary subunit delta, found in Bos taurus (Bovine).